Reading from the N-terminus, the 395-residue chain is tRNA-specific 2-thiouridylase MnmA (395 aa).

ATP is bound by residues 6–13 (AMSGGVDS) and leucine 32. Cysteine 101 (nucleophile) is an active-site residue. A disulfide bridge connects residues cysteine 101 and cysteine 193. ATP is bound at residue glycine 125. Residues 143–145 (KDQ) are interaction with tRNA. Cysteine 193 acts as the Cysteine persulfide intermediate in catalysis.

It belongs to the MnmA/TRMU family.

It localises to the cytoplasm. It carries out the reaction S-sulfanyl-L-cysteinyl-[protein] + uridine(34) in tRNA + AH2 + ATP = 2-thiouridine(34) in tRNA + L-cysteinyl-[protein] + A + AMP + diphosphate + H(+). Its function is as follows. Catalyzes the 2-thiolation of uridine at the wobble position (U34) of tRNA, leading to the formation of s(2)U34. The chain is tRNA-specific 2-thiouridylase MnmA from Corynebacterium jeikeium (strain K411).